We begin with the raw amino-acid sequence, 687 residues long: Polyphosphate kinase (687 aa).

Asparagine 45 is an ATP binding site. Residues arginine 375 and arginine 405 each contribute to the Mg(2+) site. Residue histidine 435 is the Phosphohistidine intermediate of the active site. The ATP site is built by tyrosine 472, arginine 568, and histidine 596.

The protein belongs to the polyphosphate kinase 1 (PPK1) family. Mg(2+) serves as cofactor. An intermediate of this reaction is the autophosphorylated ppk in which a phosphate is covalently linked to a histidine residue through a N-P bond.

The enzyme catalyses [phosphate](n) + ATP = [phosphate](n+1) + ADP. In terms of biological role, catalyzes the reversible transfer of the terminal phosphate of ATP to form a long-chain polyphosphate (polyP). The protein is Polyphosphate kinase of Burkholderia ambifaria (strain MC40-6).